We begin with the raw amino-acid sequence, 1976 residues long: MILKYSLLGNLLLLWINIVNSVVMVGLYYGFLTTFSIGPSYLLLLRTRVMKEGSEKEVSATTAFIMGQFIVFISTYYPPLHLALSRPHTLTVLVIPYLLSHFWFFWNNKKSLFDYRSTHGNFIPNLSIQYVFLNNLIFQLFNHFVLPSSTLTRLVDISMFRYNNKILFVTSSFFGWLIGHMLLMKCIGLVLSWPWEKMRSNALFRSNKYLMSKWRNSVSQIFSILLFIICICYLGRMPSPIITKKLKESSKREEKKKTEEEGNVEIERVSKTNKIKQEEDGSVEEDLSISLEMEERWNLYKKIYETEEIWLNGKEKDEFDLKEKEKNKLLGIEKSLLSLLFDYQRWNRPLRYIENDRFSNAVRNEMSQSFFYTCASDGKQRISFTYPPSLSTFFEMIKKKMSFRTAEKLPAEDLSNEWVSTTKKQRDNLRNEFINRIEAIDKGSLILNVVEKRARLCNDEEEQECLPKFYDPLLNGPYRGTRKKGYLYSIRNDSTTSTRGSTKTAWINKIHAILFSKDYREFEREFEHEMYKLGVKSSSTGIEDSSVSIGEFTEEAEEAEKSRTRFKQFAFGGEEKVFEKVFDMVRADPNDQKISNLPIEEIKKKVPRWLYKLTSDLDFEEEEEEEEEDDQEESTDDHGIRSRKGKRVVIYTDTNQGTNIINTTNNIIKTHDNIIKTTNDNIIKTTTDNIINTNDNIIKTTDNIINTNDNIIKTTDNIINTNDNIIKTTDSNREKNSDDKVENGDQAEENEMALIRYSQQSDFRRDLIKGSMRAQRRKTVTWEMFQTDAHSPLFFDRIDKTPLFSFDISRMMNLIFRNWMEEKSPKMKTSSYVGEGAKEKEKIEEEHEEEKGEYKRKEDKRQEEERIAIAETWDNIIFAQAIRGSILVTHSILRKYIVLPSLIIVKNIGRMLLFQFPEWYEDFNEWSREMHVKCTYNGVQLSETEFPKDWLTDGIQIKILFPFSLKPWHRSKLRSHHKDLRKKQKNFCFLTIWGMETELPFGSPRKKPFFFEPIHKAFEKKIIKVKKKGFFFLIIIKDNIKGFIKILNEKIRWIIKIVLFIKIKVKEVFFFFVLRRVSDPSQNEEPSKNEKDSKISNRIIHESPIRIVSRDWTNDSLIEIKINDLADKTTKIWDQVEKIRKDKKKKPLTPDIEDIDISTNKGNCSNKRTESRKHIWQISKKRRSARLISKWDSFMKSFIERIYMSILLCITNIYRIYVQFFLDSTKKTLNGYTYNDEIKEKDTNEPNPNIIPFISTVKSLSTYTTNISSDSNSPIYCDLSSLSQAYVFYKLLQTQVSNKYKSESIFHYYRTYPFIKDGIKDYFHDYFHTRGIFDSESKHKKLRNSGMSEWKNWLKSHYQYNLSHDKWSRLAPLKWRKKVNQHRTIQNNDSPKSGSYEEKDQLIHSGKKDYSKLGLLKSPSREMKSPSREKKIKKHYRYDLLSYKYLNYEDVKDSNIYGSPLQVNRHGEISNYNTHKYKSFYAITINDSLEDKYTIDRDQNLDRKYFELRITNFDPRNNIETRTSTDIGTFINKKKKTTKTGTNKKDILSLYIRIHQEIQTKQKEFFFDWMGMNEQMLDRTISNLRPWFLPEFVPLYDRYTTNPWIIPINLILFDFHGNKTSDLYIDPKVESNQKERFHPKPKVESNQKGYLELENRNRDEKERQHQGNLISDIRNKKKDVGANSAGSDIKKRRKKKKFKSKKEAELDLFLKKYFIFQLRWDDPFNKGMNNNIKVYCLLLRLMNPNEIAISSIQSGEMGLDVMLINRGFSLPELIKKGIFLIEPVRLSIKRDGISIMYQTIAISLTHKIQHQTNQGYQLKKYIDKNYFNGSIARHGGVRVNGDNNNYDLLVPEHILSPSHRRELRILSRFNYRNRNLVNKNPVFCNRAKTNAQGFEKFVNRDKHFHTDTNNSLKWKVFLWPTHRLEDLACMNRYWFDTNNGSRFSMSRIHMYQQFGIRGCYSQFPSLSRAWYMRTCK.

A run of 6 helical transmembrane segments spans residues 11 to 31 (LLLLWINIVNSVVMVGLYYGF), 64 to 84 (FIMGQFIVFISTYYPPLHLAL), 87 to 107 (PHTLTVLVIPYLLSHFWFFWN), 126 to 146 (LSIQYVFLNNLIFQLFNHFVL), 173 to 193 (FFGWLIGHMLLMKCIGLVLSW), and 221 to 241 (IFSILLFIICICYLGRMPSPI). A compositionally biased stretch (acidic residues) spans 619–635 (FEEEEEEEEEDDQEEST). Disordered regions lie at residues 619–642 (FEEEEEEEEEDDQEESTDDHGIRS) and 830–861 (SSYVGEGAKEKEKIEEEHEEEKGEYKRKEDKR). Positions 836-861 (GAKEKEKIEEEHEEEKGEYKRKEDKR) are enriched in basic and acidic residues. 2 helical membrane-spanning segments follow: residues 1054–1074 (IIKIVLFIKIKVKEVFFFFVL) and 1202–1222 (IYMSILLCITNIYRIYVQFFL). Residues 1633–1665 (QKERFHPKPKVESNQKGYLELENRNRDEKERQH) are compositionally biased toward basic and acidic residues. The disordered stretch occupies residues 1633–1669 (QKERFHPKPKVESNQKGYLELENRNRDEKERQHQGNL).

This sequence belongs to the TIC214 family. In terms of assembly, part of the Tic complex.

The protein resides in the plastid. It is found in the chloroplast inner membrane. Functionally, involved in protein precursor import into chloroplasts. May be part of an intermediate translocation complex acting as a protein-conducting channel at the inner envelope. The sequence is that of Protein TIC 214 from Nymphaea alba (White water-lily).